The following is a 231-amino-acid chain: Putative 3-methyladenine DNA glycosylase (231 aa).

The protein belongs to the DNA glycosylase MPG family.

The sequence is that of Putative 3-methyladenine DNA glycosylase from Pseudomonas fluorescens (strain Pf0-1).